The chain runs to 117 residues: Cliotide T9 (117 aa).

The first 25 residues, 1-25 (MAYVRLACLAVIFFFAASVMFTVEA), serve as a signal peptide directing secretion. A cross-link (cyclopeptide (Gly-Asn)) is located at residues 26–55 (GIPCGESCVFIPCLTTVVGCSCKNKVCYNN). 3 cysteine pairs are disulfide-bonded: Cys29/Cys45, Cys33/Cys47, and Cys38/Cys52. Residues 56-117 (HVIAAEANSI…YLLKDFLKMP (62 aa)) constitute a propeptide, removed in mature form.

In terms of processing, contains 3 disulfide bonds. Post-translationally, this is a cyclic peptide. Expressed in seed but not in root, nodule, flower, stem, shoot, leaf and pod (at protein level).

Functionally, probably participates in a plant defense mechanism. The sequence is that of Cliotide T9 from Clitoria ternatea (Butterfly pea).